The sequence spans 673 residues: DNA ligase (673 aa).

NAD(+)-binding positions include 35 to 39, 84 to 85, and E115; these read DAQYD and SL. K117 serves as the catalytic N6-AMP-lysine intermediate. 4 residues coordinate NAD(+): R138, E178, K294, and K318. Positions 412, 415, 430, and 435 each coordinate Zn(2+). Residues 594 to 673 enclose the BRCT domain; that stretch reads LQSDRLAGKS…DELHALLVDE (80 aa).

Belongs to the NAD-dependent DNA ligase family. LigA subfamily. Mg(2+) is required as a cofactor. It depends on Mn(2+) as a cofactor.

It carries out the reaction NAD(+) + (deoxyribonucleotide)n-3'-hydroxyl + 5'-phospho-(deoxyribonucleotide)m = (deoxyribonucleotide)n+m + AMP + beta-nicotinamide D-nucleotide.. In terms of biological role, DNA ligase that catalyzes the formation of phosphodiester linkages between 5'-phosphoryl and 3'-hydroxyl groups in double-stranded DNA using NAD as a coenzyme and as the energy source for the reaction. It is essential for DNA replication and repair of damaged DNA. The sequence is that of DNA ligase from Herpetosiphon aurantiacus (strain ATCC 23779 / DSM 785 / 114-95).